The chain runs to 134 residues: DNA-binding protein H-NS homolog (134 aa).

A disordered region spans residues His-106–Ile-134. A DNA-binding region spans residues Gln-112–Arg-117.

This sequence belongs to the histone-like protein H-NS family. As to quaternary structure, homodimer that oligomerizes on DNA into higher-order complexes that form bridges between disparate regions of DNA compacting it.

It is found in the cytoplasm. Its subcellular location is the nucleoid. In terms of biological role, a DNA-binding protein implicated in transcriptional repression and chromosome organization and compaction. Binds nucleation sites in AT-rich DNA and bridges them, forming higher-order nucleoprotein complexes and condensing the chromosome. As many horizontally transferred genes are AT-rich, it plays a central role in silencing foreign genes. A subset of genes are repressed by H-NS in association with other proteins. The protein is DNA-binding protein H-NS homolog (hns) of Haemophilus influenzae (strain ATCC 51907 / DSM 11121 / KW20 / Rd).